Reading from the N-terminus, the 691-residue chain is Cyclic nucleotide-gated channel alpha-1 (691 aa).

Residues 1 to 168 (MKKNIINTWY…PAGNMYYNWL (168 aa)) lie on the Cytoplasmic side of the membrane. Residues 31–151 (ENGARSSFSD…KGKDKKEEEK (121 aa)) are disordered. A compositionally biased stretch (acidic residues) spans 39–56 (SDDDGDDDSASMFEESEN). Basic and acidic residues-rich tracts occupy residues 57–76 (ETPH…DPSQ) and 112–151 (SKSG…EEEK). A helical transmembrane segment spans residues 169 to 190 (FCITLPVMYNWTMVIARACFDE). Residues 191-200 (LQSDYLEYWI) are Extracellular-facing. A helical transmembrane segment spans residues 201 to 221 (IFDYLSDIVYLLDMFVRTRTG). Over 222–246 (YLEQGLLVREEAKLIEKYKSNLQFK) the chain is Cytoplasmic. Residues 247 to 265 (LDFLSVIPTDLLYFKLGWN) form a helical membrane-spanning segment. At 266 to 270 (YPEIR) the chain is on the extracellular side. The helical transmembrane segment at 271-289 (LNRLLRISRMFEFFQRTET) threads the bilayer. At 290–296 (RTNYPNI) the chain is on the cytoplasmic side. Residues 294 to 402 (PNIFRISNLV…GNIGSMISNM (109 aa)) are ion conduction pathway. The chain crosses the membrane as a helical span at residues 297-320 (FRISNLVMYIVIIIHWNACVYFSI). Residues 321–343 (SKAIGFGNDTWVYPDVNDPEFGR) lie on the Extracellular side of the membrane. An N-linked (GlcNAc...) asparagine glycan is attached at N328. Transmembrane regions (helical) follow at residues 344–378 (LARK…VFVV) and 379–403 (VDFL…SNMN). The tract at residues 361–364 (TIGE) is selectivity filter. Residues 404–480 (AARAEFQARI…DTLKKVRIFA (77 aa)) form a C-linker region. Residues 404–691 (AARAEFQARI…ESRPLDSTQD (288 aa)) are Cytoplasmic-facing. Residues 484-604 (AGLLVELVLK…EEKGKQILMK (121 aa)) form a cyclic nucleotide-binding domain region. Residues G544, S547, R560, and T561 each contribute to the 3',5'-cyclic GMP site. 3',5'-cyclic AMP contacts are provided by R560 and T561. A coiled-coil region spans residues 622-676 (LEEKVTRMEGSVDLLQTRFARILAEYESMQQKLKQRLTKVERFLKPIIDTEFSAL).

Belongs to the cyclic nucleotide-gated cation channel (TC 1.A.1.5) family. CNGA1 subfamily. As to quaternary structure, forms heterotetrameric channels composed of CNGA1 and CNGB1 subunits with 3:1 stoichiometry. May also form cyclic nucleotide-activated homotetrameric channels, that are efficiently activated by saturating cGMP, but poorly activated by saturating cAMP compared to the heterotetramer with CNGB1. The channel binds Ca(2+)-bound CALM1 via CaM1 and CaM2 regions of the CNGB1 subunit; this interaction modulates the affinity of the channel for cNMPs in response to intracellular Ca(2+) levels.

It is found in the cell membrane. It catalyses the reaction Ca(2+)(in) = Ca(2+)(out). The enzyme catalyses Na(+)(in) = Na(+)(out). The catalysed reaction is K(+)(in) = K(+)(out). It carries out the reaction NH4(+)(in) = NH4(+)(out). It catalyses the reaction Rb(+)(in) = Rb(+)(out). The enzyme catalyses Li(+)(in) = Li(+)(out). The catalysed reaction is Cs(+)(in) = Cs(+)(out). In terms of biological role, pore-forming subunit of the rod cyclic nucleotide-gated channel. Mediates rod photoresponses at dim light converting transient changes in intracellular cGMP levels into electrical signals. In the dark, cGMP levels are high and keep the channel open enabling a steady inward current carried by Na(+) and Ca(2+) ions that leads to membrane depolarization and neurotransmitter release from synaptic terminals. Upon photon absorption cGMP levels decline leading to channel closure and membrane hyperpolarization that ultimately slows neurotransmitter release and signals the presence of light, the end point of the phototransduction cascade. Conducts cGMP- and cAMP-gated ion currents, with permeability for monovalent and divalent cations. The selectivity for Ca(2+) over Na(+) increases with cGMP concentrations, whereas the selectivity among monovalent ions is independent of the cGMP levels. The protein is Cyclic nucleotide-gated channel alpha-1 of Canis lupus familiaris (Dog).